A 395-amino-acid polypeptide reads, in one-letter code: uncharacterized protein (395 aa).

Helical transmembrane passes span 42-62, 67-87, 97-117, 128-148, 196-216, 241-261, and 281-301; these read LKYV…LIFI, LYSF…FVLL, LIFN…LIIF, ILST…SIIP, FIYA…LYIL, ILFY…SFVA, and LFFS…GTVV.

It is found in the cell membrane. This is an uncharacterized protein from Mycoplasma genitalium (strain ATCC 33530 / DSM 19775 / NCTC 10195 / G37) (Mycoplasmoides genitalium).